The chain runs to 322 residues: HPr kinase/phosphorylase (322 aa).

Active-site residues include H146 and K167. Position 161 to 168 (161 to 168 (GDSGLGKS)) interacts with ATP. S168 is a Mg(2+) binding site. The active-site Proton acceptor; for phosphorylation activity. Proton donor; for dephosphorylation activity is D185. Residues 209-218 (LEVRGLGLLD) are important for the catalytic mechanism of both phosphorylation and dephosphorylation. Mg(2+) is bound at residue E210. The active site involves R250. Residues 271-276 (QVAAGR) are important for the catalytic mechanism of dephosphorylation.

It belongs to the HPrK/P family. In terms of assembly, homohexamer. It depends on Mg(2+) as a cofactor.

It carries out the reaction [HPr protein]-L-serine + ATP = [HPr protein]-O-phospho-L-serine + ADP + H(+). The catalysed reaction is [HPr protein]-O-phospho-L-serine + phosphate + H(+) = [HPr protein]-L-serine + diphosphate. In terms of biological role, catalyzes the ATP- as well as the pyrophosphate-dependent phosphorylation of a specific serine residue in HPr, a phosphocarrier protein of the phosphoenolpyruvate-dependent sugar phosphotransferase system (PTS). HprK/P also catalyzes the pyrophosphate-producing, inorganic phosphate-dependent dephosphorylation (phosphorolysis) of seryl-phosphorylated HPr (P-Ser-HPr). In Burkholderia mallei (strain NCTC 10247), this protein is HPr kinase/phosphorylase.